The following is a 102-amino-acid chain: uncharacterized protein (102 aa).

The segment at 1–102 is disordered; the sequence is MPVEQDGLTG…LANIREQNHQ (102 aa).

This is an uncharacterized protein from Caenorhabditis elegans.